The following is a 107-amino-acid chain: QILLTQSPAIMSASPGQKVTMTCSASSSVSYMHWYQQKSGTSPKRWIYDTSKLASGVPARFSGSGSATSYSLTITSMQAEDAATYYCQQWSSNPLTFGAGTKLXLKR.

The segment at 1–23 is framework-1; the sequence is QILLTQSPAIMSASPGQKVTMTC. C23 and C87 are joined by a disulfide. Residues 24-33 form a complementarity-determining-1 region; sequence SASSSVSYMH. The interval 34 to 48 is framework-2; that stretch reads WYQQKSGTSPKRWIY. A complementarity-determining-2 region spans residues 49 to 55; sequence DTSKLAS. Residues 56–87 are framework-3; that stretch reads GVPARFSGSGSATSYSLTITSMQAEDAATYYC. Residues 88 to 96 are complementarity-determining-3; the sequence is QQWSSNPLT. Residues 97 to 106 form a framework-4 region; sequence FGAGTKLXLK.

Anti-2-phenyl oxazolone (PHOX) Antibody. This chain is Ig kappa chain V-VI region NQ2-48.2.2, found in Mus musculus (Mouse).